We begin with the raw amino-acid sequence, 264 residues long: Glutamate racemase 2 (264 aa).

Residues 10–11 and 42–43 contribute to the substrate site; these read DS and YG. The Proton donor/acceptor role is filled by cysteine 73. Residue 74–75 coordinates substrate; sequence NT. Cysteine 181 (proton donor/acceptor) is an active-site residue. A substrate-binding site is contributed by 182–183; that stretch reads TH.

The protein belongs to the aspartate/glutamate racemases family.

The enzyme catalyses L-glutamate = D-glutamate. Its pathway is cell wall biogenesis; peptidoglycan biosynthesis. In terms of biological role, provides the (R)-glutamate required for cell wall biosynthesis. The chain is Glutamate racemase 2 from Caldanaerobacter subterraneus subsp. tengcongensis (strain DSM 15242 / JCM 11007 / NBRC 100824 / MB4) (Thermoanaerobacter tengcongensis).